Consider the following 582-residue polypeptide: ATP-dependent lipid A-core flippase (582 aa).

6 helical membrane-spanning segments follow: residues 27–48, 63–85, 144–168, 170–188, 244–266, and 283–302; these read LVVSTIALVINAAADTYMISLL, FLRILPFMILGLMFVRGLSGFAS, VSIVREGASIIGLLTLMFWNSWQLS, VLIVVAPVVAFAISFVSKR, LVSAQSIADPVIQMIASLALFAV, and TFTVVFSAMFGLMRPLKALT. An ABC transmembrane type-1 domain is found at 28–310; that stretch reads VVSTIALVIN…LTSVTSEFQR (283 aa). One can recognise an ABC transporter domain in the interval 342–578; the sequence is VDVKDVTFTY…DGAYAQLHRI (237 aa). 376 to 383 serves as a coordination point for ATP; sequence GRSGSGKS.

Belongs to the ABC transporter superfamily. Lipid exporter (TC 3.A.1.106) family. In terms of assembly, homodimer.

It localises to the cell inner membrane. The catalysed reaction is ATP + H2O + lipid A-core oligosaccharideSide 1 = ADP + phosphate + lipid A-core oligosaccharideSide 2.. Its function is as follows. Involved in lipopolysaccharide (LPS) biosynthesis. Translocates lipid A-core from the inner to the outer leaflet of the inner membrane. Transmembrane domains (TMD) form a pore in the inner membrane and the ATP-binding domain (NBD) is responsible for energy generation. Shows ATPase activity. The protein is ATP-dependent lipid A-core flippase of Vibrio cholerae serotype O1 (strain ATCC 39315 / El Tor Inaba N16961).